The sequence spans 179 residues: Large ribosomal subunit protein uL5 (179 aa).

This sequence belongs to the universal ribosomal protein uL5 family. As to quaternary structure, part of the 50S ribosomal subunit; part of the 5S rRNA/L5/L18/L25 subcomplex. Contacts the 5S rRNA and the P site tRNA. Forms a bridge to the 30S subunit in the 70S ribosome.

Its function is as follows. This is one of the proteins that bind and probably mediate the attachment of the 5S RNA into the large ribosomal subunit, where it forms part of the central protuberance. In the 70S ribosome it contacts protein S13 of the 30S subunit (bridge B1b), connecting the 2 subunits; this bridge is implicated in subunit movement. Contacts the P site tRNA; the 5S rRNA and some of its associated proteins might help stabilize positioning of ribosome-bound tRNAs. The polypeptide is Large ribosomal subunit protein uL5 (Dictyoglomus thermophilum (strain ATCC 35947 / DSM 3960 / H-6-12)).